The chain runs to 278 residues: Biotin synthase (278 aa).

Positions 1-227 constitute a Radical SAM core domain; that stretch reads MQIMLCAISN…QSVVMVAGGR (227 aa). [4Fe-4S] cluster contacts are provided by cysteine 16, cysteine 20, and cysteine 23. Residues cysteine 60, cysteine 95, and cysteine 153 each contribute to the [2Fe-2S] cluster site.

This sequence belongs to the radical SAM superfamily. Biotin synthase family. Homodimer. [4Fe-4S] cluster serves as cofactor. The cofactor is [2Fe-2S] cluster.

It carries out the reaction (4R,5S)-dethiobiotin + (sulfur carrier)-SH + 2 reduced [2Fe-2S]-[ferredoxin] + 2 S-adenosyl-L-methionine = (sulfur carrier)-H + biotin + 2 5'-deoxyadenosine + 2 L-methionine + 2 oxidized [2Fe-2S]-[ferredoxin]. The protein operates within cofactor biosynthesis; biotin biosynthesis; biotin from 7,8-diaminononanoate: step 2/2. In terms of biological role, catalyzes the conversion of dethiobiotin (DTB) to biotin by the insertion of a sulfur atom into dethiobiotin via a radical-based mechanism. The polypeptide is Biotin synthase (Campylobacter jejuni (strain RM1221)).